The chain runs to 518 residues: GRIN2-like protein (518 aa).

2 disordered regions span residues 1–23 (MGLE…QSRT) and 467–500 (QTEP…FRTM). Positions 476 to 494 (KSDEDPLNKEPSSDKMEKK) are enriched in basic and acidic residues.

In terms of assembly, may interact with GNAO1.

Its function is as follows. May be involved in neurite outgrowth. The chain is GRIN2-like protein from Gallus gallus (Chicken).